The sequence spans 345 residues: Transcription factor 19 (345 aa).

The region spanning 31–88 is the FHA domain; the sequence is YRLGHRADLCDVALRPQQEPGLISGIHAELHAEPRGDDWRVSLEDHSLQGTLVNNVRL. Disordered stretches follow at residues 138 to 167 and 190 to 277; these read RSRGETRAGAGFRPMLPSQGAPQRPLSTLS and LTFS…KYPV. Residues 293–342 form a PHD-type zinc finger; it reads AAPCCCLPQEETVAWVQCDGCDVWFHVACVGCSIQAAREADFRCPGCRAG. Zn(2+) contacts are provided by C296, C298, C310, C313, H318, C321, C336, and C339.

The protein localises to the nucleus. In terms of biological role, potential transcription factor that may play a role in the regulation of genes involved in cell cycle G1/S transition. May bind to regulatory elements of genes, including the promoter of the transcription factor FOXO1. The sequence is that of Transcription factor 19 (TCF19) from Macaca mulatta (Rhesus macaque).